Here is a 212-residue protein sequence, read N- to C-terminus: Ribosomal RNA large subunit methyltransferase E (212 aa).

The S-adenosyl-L-methionine site is built by G56, W58, D78, D94, and D117. K157 (proton acceptor) is an active-site residue.

It belongs to the class I-like SAM-binding methyltransferase superfamily. RNA methyltransferase RlmE family.

Its subcellular location is the cytoplasm. The catalysed reaction is uridine(2552) in 23S rRNA + S-adenosyl-L-methionine = 2'-O-methyluridine(2552) in 23S rRNA + S-adenosyl-L-homocysteine + H(+). Functionally, specifically methylates the uridine in position 2552 of 23S rRNA at the 2'-O position of the ribose in the fully assembled 50S ribosomal subunit. In Ehrlichia chaffeensis (strain ATCC CRL-10679 / Arkansas), this protein is Ribosomal RNA large subunit methyltransferase E.